A 489-amino-acid chain; its full sequence is MEAPDYEVLSVREQLFHERIRECIISTLLFATLYILCHIFLTRFKKPAEFTTVDDEDATVNKIALELCTFTLAIALGAVLLLPFSIISNEVLLSLPRNYYIQWLNGSLIHGLWNLVFLFSNLSLIFLMPFAYFFTESEGFAGSRKGVLGRVYETVVMLMLLTLLVLGMVWVASAIVDKNKANRESLYDFWEYYLPYLYSCISFLGVLLLLVCTPLGLARMFSVTGKLLVKPRLLEDLEEQLYCSAFEEAALTRRICNPTSCWLPLDMELLHRQVLALQTQRVLLEKRRKASAWQRNLGYPLAMLCLLVLTGLSVLIVAIHILELLIDEAAMPRGMQGTSLGQVSFSKLGSFGAVIQVVLIFYLMVSSVVGFYSSPLFRSLRPRWHDTAMTQIIGNCVCLLVLSSALPVFSRTLGLTRFDLLGDFGRFNWLGNFYIVFLYNAAFAGLTTLCLVKTFTAAVRAELIRAFGLDRLPLPVSGFPQASRKTQHQ.

Over 1 to 21 (MEAPDYEVLSVREQLFHERIR) the chain is Extracellular. The interval 1-59 (MEAPDYEVLSVREQLFHERIRECIISTLLFATLYILCHIFLTRFKKPAEFTTVDDEDAT) is interaction with LGB. The LCN1-binding stretch occupies residues 1–76 (MEAPDYEVLS…LCTFTLAIAL (76 aa)). Residues 22-42 (ECIISTLLFATLYILCHIFLT) traverse the membrane as a helical segment. Residues 43 to 66 (RFKKPAEFTTVDDEDATVNKIALE) are Cytoplasmic-facing. A helical membrane pass occupies residues 67–87 (LCTFTLAIALGAVLLLPFSII). Over 88-114 (SNEVLLSLPRNYYIQWLNGSLIHGLWN) the chain is Extracellular. Residues 115 to 135 (LVFLFSNLSLIFLMPFAYFFT) form a helical membrane-spanning segment. The Cytoplasmic portion of the chain corresponds to 136–154 (ESEGFAGSRKGVLGRVYET). Residues 155-175 (VVMLMLLTLLVLGMVWVASAI) traverse the membrane as a helical segment. Over 176-196 (VDKNKANRESLYDFWEYYLPY) the chain is Extracellular. Residues 197–217 (LYSCISFLGVLLLLVCTPLGL) form a helical membrane-spanning segment. The Cytoplasmic segment spans residues 218–305 (ARMFSVTGKL…NLGYPLAMLC (88 aa)). A helical membrane pass occupies residues 306 to 326 (LLVLTGLSVLIVAIHILELLI). Topologically, residues 327–350 (DEAAMPRGMQGTSLGQVSFSKLGS) are extracellular. The chain crosses the membrane as a helical span at residues 351–371 (FGAVIQVVLIFYLMVSSVVGF). At 372-388 (YSSPLFRSLRPRWHDTA) the chain is on the cytoplasmic side. A helical membrane pass occupies residues 389–409 (MTQIIGNCVCLLVLSSALPVF). Residues 410-431 (SRTLGLTRFDLLGDFGRFNWLG) lie on the Extracellular side of the membrane. Residues 432–452 (NFYIVFLYNAAFAGLTTLCLV) traverse the membrane as a helical segment. Topologically, residues 453 to 489 (KTFTAAVRAELIRAFGLDRLPLPVSGFPQASRKTQHQ) are cytoplasmic.

The protein belongs to the LIMR family. As to quaternary structure, dimer. Can also form higher oligomers. Interacts with LCN1; this interaction mediates the endocytosis of LCN1. Interacts with UBAC2, FAF2, VCP, AMFR, ZNRF3, CTNNB1, LRP6, GSK3A and GSK3B. Interacts with DVL2 and RNF43. Interaction with SCGB1A1 has been observed in PubMed:16423471, but not in PubMed:23964685. Interaction with LGB which mediates the endocytosis of LGB has been observed in PubMed:17991420, but not in PubMed:23964685. In terms of tissue distribution, expressed in testis, pituitary gland, adrenal gland, trachea, placenta, thymus, cerebellum, stomach, mammary gland, spinal cord. A weaker expression is detected in colon, pancreas, and prostate.

It localises to the cell membrane. The protein localises to the endoplasmic reticulum membrane. Functionally, plays an essential role in lymphocyte development by negatively regulating the canonical Wnt signaling pathway. In association with UBAC2 and E3 ubiquitin-protein ligase AMFR, promotes the ubiquitin-mediated degradation of CTNNB1 and Wnt receptors FZD6 and LRP6. LMBR1L stabilizes the beta-catenin destruction complex that is required for regulating CTNNB1 levels. Acts as a LCN1 receptor and can mediate its endocytosis. In Homo sapiens (Human), this protein is Protein LMBR1L (LMBR1L).